The sequence spans 155 residues: 6,7-dimethyl-8-ribityllumazine synthase (155 aa).

Residues Phe24, 58–60 (AFE), and 82–84 (VII) each bind 5-amino-6-(D-ribitylamino)uracil. Residue 87 to 88 (ST) participates in (2S)-2-hydroxy-3-oxobutyl phosphate binding. Catalysis depends on His90, which acts as the Proton donor. Phe115 contacts 5-amino-6-(D-ribitylamino)uracil. Residue Arg129 coordinates (2S)-2-hydroxy-3-oxobutyl phosphate.

Belongs to the DMRL synthase family.

It carries out the reaction (2S)-2-hydroxy-3-oxobutyl phosphate + 5-amino-6-(D-ribitylamino)uracil = 6,7-dimethyl-8-(1-D-ribityl)lumazine + phosphate + 2 H2O + H(+). Its pathway is cofactor biosynthesis; riboflavin biosynthesis; riboflavin from 2-hydroxy-3-oxobutyl phosphate and 5-amino-6-(D-ribitylamino)uracil: step 1/2. In terms of biological role, catalyzes the formation of 6,7-dimethyl-8-ribityllumazine by condensation of 5-amino-6-(D-ribitylamino)uracil with 3,4-dihydroxy-2-butanone 4-phosphate. This is the penultimate step in the biosynthesis of riboflavin. This Chlorobium limicola (strain DSM 245 / NBRC 103803 / 6330) protein is 6,7-dimethyl-8-ribityllumazine synthase.